The sequence spans 1378 residues: Carboxypeptidase D (1378 aa).

A signal peptide spans 1-37 (MASGWDERPPWRLESLRLLPPPPLLLLLLLLRSSAQA). Over 38-1297 (AHIKKAEATT…DNRIFGLPRE (1260 aa)) the chain is Extracellular. The Peptidase M14 1 domain maps to 62 to 380 (HYYHEAALGE…ESLITLIEKV (319 aa)). Residues histidine 139 and glutamate 142 each contribute to the Zn(2+) site. The Cell attachment site signature appears at 162-164 (RGD). N-linked (GlcNAc...) asparagine glycans are attached at residues asparagine 172 and asparagine 217. Residues 189–232 (RAREGDCGLGDSGPPGTSGRDNSRGRDLNRSFPDQFSTGEPPSL) are disordered. Histidine 257 contributes to the Zn(2+) binding site. The residue at position 265 (tyrosine 265) is a Phosphotyrosine. Position 270 is a phosphoserine (serine 270). Glutamate 350 acts as the Proton donor/acceptor in catalysis. Residues asparagine 399, asparagine 410, asparagine 429, and asparagine 522 are each glycosylated (N-linked (GlcNAc...) asparagine). The region spanning 502-792 (HHHHFPDMEI…RSLIQFMKQV (291 aa)) is the Peptidase M14 2 domain. The Zn(2+) site is built by histidine 564 and glutamate 567. N-linked (GlcNAc...) asparagine glycosylation occurs at asparagine 626. A Zn(2+)-binding site is contributed by histidine 671. Glutamate 762 acts as the Proton donor/acceptor in catalysis. Asparagine 811, asparagine 855, asparagine 867, asparagine 879, asparagine 953, and asparagine 976 each carry an N-linked (GlcNAc...) asparagine glycan. Residues 875 to 898 (TDANNESKKGKGHSTSTDDTSDPT) are disordered. A Peptidase M14 3 domain is found at 930–1209 (RYHSYKDLSE…KSLLSMLVEV (280 aa)). A compositionally biased stretch (basic and acidic residues) spans 1039 to 1048 (RERAQEKDCT). A disordered region spans residues 1039–1068 (RERAQEKDCTSKTGHTNARGRDLDTDFTSN). N-linked (GlcNAc...) asparagine glycans are attached at residues asparagine 1068 and asparagine 1140. Residues 1298–1318 (LVVTVSGATMSALILTACIIW) form a helical membrane-spanning segment. Residues cysteine 1315, cysteine 1319, and cysteine 1321 are each lipidated (S-palmitoyl cysteine). The Cytoplasmic segment spans residues 1319–1378 (CICSIKSNRHKDGFHRLRQHHDEYEDEIRMMSTGSKKSLLSHEFQDETDTEEETLYSSKH). Phosphoserine is present on residues serine 1356 and serine 1359. The interval 1357-1378 (LLSHEFQDETDTEEETLYSSKH) is disordered. Phosphothreonine occurs at positions 1366 and 1368.

The protein belongs to the peptidase M14 family. Zn(2+) serves as cofactor. As to expression, isoform 1 is widely expressed with highest levels in the hippocampus, spinal cord, atrium, colon, testis and ovaries. Detected in the liver of females but not males. Isoform 2 is not detected in brain or lung.

The protein resides in the cell membrane. Its subcellular location is the nucleus. The enzyme catalyses Releases C-terminal Arg and Lys from polypeptides.. The polypeptide is Carboxypeptidase D (Rattus norvegicus (Rat)).